Reading from the N-terminus, the 477-residue chain is Bifunctional protein HldE (477 aa).

The ribokinase stretch occupies residues Met1–Thr321. Asn198–Glu201 provides a ligand contact to ATP. Asp266 is an active-site residue. Residues Phe348–Val477 are cytidylyltransferase.

It in the N-terminal section; belongs to the carbohydrate kinase PfkB family. This sequence in the C-terminal section; belongs to the cytidylyltransferase family. As to quaternary structure, homodimer.

It catalyses the reaction D-glycero-beta-D-manno-heptose 7-phosphate + ATP = D-glycero-beta-D-manno-heptose 1,7-bisphosphate + ADP + H(+). The catalysed reaction is D-glycero-beta-D-manno-heptose 1-phosphate + ATP + H(+) = ADP-D-glycero-beta-D-manno-heptose + diphosphate. It participates in nucleotide-sugar biosynthesis; ADP-L-glycero-beta-D-manno-heptose biosynthesis; ADP-L-glycero-beta-D-manno-heptose from D-glycero-beta-D-manno-heptose 7-phosphate: step 1/4. Its pathway is nucleotide-sugar biosynthesis; ADP-L-glycero-beta-D-manno-heptose biosynthesis; ADP-L-glycero-beta-D-manno-heptose from D-glycero-beta-D-manno-heptose 7-phosphate: step 3/4. Catalyzes the phosphorylation of D-glycero-D-manno-heptose 7-phosphate at the C-1 position to selectively form D-glycero-beta-D-manno-heptose-1,7-bisphosphate. Functionally, catalyzes the ADP transfer from ATP to D-glycero-beta-D-manno-heptose 1-phosphate, yielding ADP-D-glycero-beta-D-manno-heptose. This is Bifunctional protein HldE from Sulfurimonas denitrificans (strain ATCC 33889 / DSM 1251) (Thiomicrospira denitrificans (strain ATCC 33889 / DSM 1251)).